Reading from the N-terminus, the 100-residue chain is Putative septation protein SpoVG (100 aa).

Belongs to the SpoVG family.

Its function is as follows. Could be involved in septation. This is Putative septation protein SpoVG from Staphylococcus haemolyticus (strain JCSC1435).